Reading from the N-terminus, the 285-residue chain is 2-dehydro-3-deoxyphosphooctonate aldolase (285 aa).

The protein belongs to the KdsA family.

It localises to the cytoplasm. The catalysed reaction is D-arabinose 5-phosphate + phosphoenolpyruvate + H2O = 3-deoxy-alpha-D-manno-2-octulosonate-8-phosphate + phosphate. Its pathway is carbohydrate biosynthesis; 3-deoxy-D-manno-octulosonate biosynthesis; 3-deoxy-D-manno-octulosonate from D-ribulose 5-phosphate: step 2/3. It functions in the pathway bacterial outer membrane biogenesis; lipopolysaccharide biosynthesis. In Acidovorax ebreus (strain TPSY) (Diaphorobacter sp. (strain TPSY)), this protein is 2-dehydro-3-deoxyphosphooctonate aldolase.